A 471-amino-acid chain; its full sequence is 3-isopropylmalate dehydratase large subunit (471 aa).

The [4Fe-4S] cluster site is built by Cys347, Cys407, and Cys410.

Belongs to the aconitase/IPM isomerase family. LeuC type 1 subfamily. In terms of assembly, heterodimer of LeuC and LeuD. [4Fe-4S] cluster serves as cofactor.

The catalysed reaction is (2R,3S)-3-isopropylmalate = (2S)-2-isopropylmalate. Its pathway is amino-acid biosynthesis; L-leucine biosynthesis; L-leucine from 3-methyl-2-oxobutanoate: step 2/4. Functionally, catalyzes the isomerization between 2-isopropylmalate and 3-isopropylmalate, via the formation of 2-isopropylmaleate. The sequence is that of 3-isopropylmalate dehydratase large subunit from Geobacillus kaustophilus (strain HTA426).